We begin with the raw amino-acid sequence, 139 residues long: Putative pre-16S rRNA nuclease (139 aa).

This sequence belongs to the YqgF nuclease family.

Its subcellular location is the cytoplasm. Its function is as follows. Could be a nuclease involved in processing of the 5'-end of pre-16S rRNA. The polypeptide is Putative pre-16S rRNA nuclease (Rippkaea orientalis (strain PCC 8801 / RF-1) (Cyanothece sp. (strain PCC 8801))).